Here is a 234-residue protein sequence, read N- to C-terminus: UPF0502 protein Bphyt_5265 (234 aa).

This sequence belongs to the UPF0502 family.

This is UPF0502 protein Bphyt_5265 from Paraburkholderia phytofirmans (strain DSM 17436 / LMG 22146 / PsJN) (Burkholderia phytofirmans).